A 427-amino-acid polypeptide reads, in one-letter code: tRNA(Ile)-lysidine synthase (427 aa).

Position 25–30 (25–30 (SGGLDS)) interacts with ATP.

It belongs to the tRNA(Ile)-lysidine synthase family.

Its subcellular location is the cytoplasm. The catalysed reaction is cytidine(34) in tRNA(Ile2) + L-lysine + ATP = lysidine(34) in tRNA(Ile2) + AMP + diphosphate + H(+). Functionally, ligates lysine onto the cytidine present at position 34 of the AUA codon-specific tRNA(Ile) that contains the anticodon CAU, in an ATP-dependent manner. Cytidine is converted to lysidine, thus changing the amino acid specificity of the tRNA from methionine to isoleucine. This is tRNA(Ile)-lysidine synthase from Histophilus somni (strain 2336) (Haemophilus somnus).